Consider the following 344-residue polypeptide: Ribosomal RNA large subunit methyltransferase Cfr (344 aa).

Glu-90 (proton acceptor) is an active-site residue. Residues 97-330 (KQGWESFCIS…ATVRTQFGSE (234 aa)) form the Radical SAM core domain. Cys-104 and Cys-335 form a disulfide bridge. 3 residues coordinate [4Fe-4S] cluster: Cys-111, Cys-115, and Cys-118. Residues 157–158 (GE), Ser-188, 211–213 (SLH), and Asn-292 each bind S-adenosyl-L-methionine. Cys-335 (S-methylcysteine intermediate) is an active-site residue.

This sequence belongs to the radical SAM superfamily. RlmN family. Cfr subfamily. The cofactor is [4Fe-4S] cluster.

The protein localises to the cytoplasm. It catalyses the reaction adenosine(2503) in 23S rRNA + 2 reduced [2Fe-2S]-[ferredoxin] + 2 S-adenosyl-L-methionine = 8-methyladenosine(2503) in 23S rRNA + 5'-deoxyadenosine + L-methionine + 2 oxidized [2Fe-2S]-[ferredoxin] + S-adenosyl-L-homocysteine. Functionally, specifically methylates position 8 of adenine 2503 in 23S rRNA. Confers resistance to some classes of antibiotics. This chain is Ribosomal RNA large subunit methyltransferase Cfr, found in Clostridium botulinum (strain Langeland / NCTC 10281 / Type F).